Here is a 557-residue protein sequence, read N- to C-terminus: MKEKIRKKILLASEEPGVYIFKNKGVPIYIGKAKRLSSRLRSYLNPQTEKVFRIVEEADELETIVVMNEREAFILEANLIKKYRPKYNVRLKDTNFYPYIRISDDEIPYVEIVKRKLRDGTYFGPYTSVQFVRNLLEILQKIMGFRTCKSDLKRIKRPCFLYHLGRCIGPCIGNIESHEEAIRKLREFLSGNMEEVFDYLKEKMETHSKMLDFENAAKYRDLLLNLSNVLESQGVVFEENINCDVLVHAHDLFVVLRVRNGYLVGKISFEMEGGSVEDFIREYYISGRGDIPKTLILESDLDEMDYSSLGFEYVGPPRSTTEEDLLEKAKKNLENELKMRGLRKEALEELMKLLNMKDFPYRIEGIDISHLQGKYTVASLVVFEDGFPKKSDYRRYKIEQDHPDDYESIRTVVKRRYSKHPLPNLLFVDGGIGQVNAAIEALKEIGKDCPVVGLAKKEETVVFENREIHLPHDHPVLRLLVQIRDETHRFAVSYHRKRREKESLRSVLDNVPGIGPIRKKKLIEHFGSLENIRSASLEEIARVIGSTEIARRVLDIL.

The region spanning 14–89 is the GIY-YIG domain; that stretch reads EEPGVYIFKN…IKKYRPKYNV (76 aa). The UVR domain maps to 194–229; that stretch reads EEVFDYLKEKMETHSKMLDFENAAKYRDLLLNLSNV.

Belongs to the UvrC family. As to quaternary structure, interacts with UvrB in an incision complex.

The protein resides in the cytoplasm. Its function is as follows. The UvrABC repair system catalyzes the recognition and processing of DNA lesions. UvrC both incises the 5' and 3' sides of the lesion. The N-terminal half is responsible for the 3' incision and the C-terminal half is responsible for the 5' incision. The polypeptide is UvrABC system protein C (Thermotoga sp. (strain RQ2)).